Reading from the N-terminus, the 344-residue chain is 2,3,4,5-tetrahydropyridine-2,6-dicarboxylate N-succinyltransferase (344 aa).

Glutamate 205 contributes to the Mg(2+) binding site. Glutamate 221 serves as the catalytic Acyl-anhydride intermediate. Succinyl-CoA is bound by residues arginine 223, glycine 238, serine 241, alanine 264, 279-280 (EA), 287-289 (GTK), lysine 304, and 317-320 (RRNS).

The protein belongs to the type 2 tetrahydrodipicolinate N-succinyltransferase family. In terms of assembly, homotrimer. It depends on Magnesium ions are not essential for catalysis. as a cofactor.

It is found in the cytoplasm. The enzyme catalyses (S)-2,3,4,5-tetrahydrodipicolinate + succinyl-CoA + H2O = (S)-2-succinylamino-6-oxoheptanedioate + CoA. It participates in amino-acid biosynthesis; L-lysine biosynthesis via DAP pathway; LL-2,6-diaminopimelate from (S)-tetrahydrodipicolinate (succinylase route): step 1/3. Weakly inhibited by D-2-aminopimelate. In terms of biological role, catalyzes the conversion of the cyclic tetrahydrodipicolinate (THDP) into the acyclic N-succinyl-L-2-amino-6-oxopimelate using succinyl-CoA. Displays succinyl transferase activity with L-2-aminopimelate and succinyl-CoA as substrates. The chain is 2,3,4,5-tetrahydropyridine-2,6-dicarboxylate N-succinyltransferase from Pseudomonas aeruginosa (strain ATCC 15692 / DSM 22644 / CIP 104116 / JCM 14847 / LMG 12228 / 1C / PRS 101 / PAO1).